The primary structure comprises 429 residues: Gamma-glutamyl phosphate reductase (429 aa).

The protein belongs to the gamma-glutamyl phosphate reductase family.

Its subcellular location is the cytoplasm. It catalyses the reaction L-glutamate 5-semialdehyde + phosphate + NADP(+) = L-glutamyl 5-phosphate + NADPH + H(+). It functions in the pathway amino-acid biosynthesis; L-proline biosynthesis; L-glutamate 5-semialdehyde from L-glutamate: step 2/2. Functionally, catalyzes the NADPH-dependent reduction of L-glutamate 5-phosphate into L-glutamate 5-semialdehyde and phosphate. The product spontaneously undergoes cyclization to form 1-pyrroline-5-carboxylate. In Methylocella silvestris (strain DSM 15510 / CIP 108128 / LMG 27833 / NCIMB 13906 / BL2), this protein is Gamma-glutamyl phosphate reductase.